The following is a 152-amino-acid chain: uncharacterized protein (152 aa).

3 helical membrane passes run 13 to 33 (LLWF…LLFF), 38 to 58 (LIVE…SLFM), and 69 to 89 (WVIF…FFVI).

The protein localises to the cell membrane. This is an uncharacterized protein from Mycoplasma pneumoniae (strain ATCC 29342 / M129 / Subtype 1) (Mycoplasmoides pneumoniae).